A 323-amino-acid chain; its full sequence is Mitochondrial glutamate carrier 1 (323 aa).

Solcar repeat units lie at residues 6–93, 101–214, and 223–312; these read ISLP…FRHQ, LTLP…LNQL, and SPFY…GIAE. The next 6 helical transmembrane spans lie at 12-32, 62-82, 107-127, 189-209, 223-243, and 292-312; these read LINGGIAGLIGVTCVFPIDLA, YFGMYRGAAVNLTLVTPEKAI, MLAGCGAGTCQVIVTTPMEML, GLGATLLRDVPFSIVYFPLFA, SPFYVSFLAGCVAGSAAAVAV, and ALVIAPLFGIAQVVYFLGIAE.

This sequence belongs to the mitochondrial carrier (TC 2.A.29) family.

It is found in the mitochondrion inner membrane. It catalyses the reaction L-glutamate(in) + H(+)(in) = L-glutamate(out) + H(+)(out). Mitochondrial glutamate/H(+) symporter. Responsible for the transport of glutamate from the cytosol into the mitochondrial matrix with the concomitant import of a proton. Plays a role in the control of glucose-stimulated insulin secretion. The sequence is that of Mitochondrial glutamate carrier 1 (Slc25a22) from Mus musculus (Mouse).